Reading from the N-terminus, the 729-residue chain is Elongation factor 2 (729 aa).

The tr-type G domain occupies 19–262 (EQIRNIAIAA…MVCEHFPNPI (244 aa)). Residues 28 to 35 (AHVDHGKT), 94 to 98 (DTPGH), and 148 to 151 (NKVD) contribute to the GTP site. Histidine 597 carries the post-translational modification Diphthamide.

Belongs to the TRAFAC class translation factor GTPase superfamily. Classic translation factor GTPase family. EF-G/EF-2 subfamily.

The protein resides in the cytoplasm. Its function is as follows. Catalyzes the GTP-dependent ribosomal translocation step during translation elongation. During this step, the ribosome changes from the pre-translocational (PRE) to the post-translocational (POST) state as the newly formed A-site-bound peptidyl-tRNA and P-site-bound deacylated tRNA move to the P and E sites, respectively. Catalyzes the coordinated movement of the two tRNA molecules, the mRNA and conformational changes in the ribosome. This Halomicrobium mukohataei (strain ATCC 700874 / DSM 12286 / JCM 9738 / NCIMB 13541) (Haloarcula mukohataei) protein is Elongation factor 2.